A 359-amino-acid polypeptide reads, in one-letter code: Guanine nucleotide-binding protein subunit alpha-11 (359 aa).

Residues Cys-9 and Cys-10 are each lipidated (S-palmitoyl cysteine). The G-alpha domain maps to 38-359 (RELKLLLLGT…QLNLKEYNLV (322 aa)). The tract at residues 41–54 (KLLLLGTGESGKST) is G1 motif. GTP is bound by residues 46–53 (GTGESGKS) and 180–183 (LRVR). Ser-53 is a Mg(2+) binding site. Residues 178 to 186 (DVLRVRVPT) are G2 motif. Thr-186 is a Mg(2+) binding site. Residues 201–210 (FRMVDVGGQR) are G3 motif. The segment at 270 to 277 (ILFLNKKD) is G4 motif. Residues 274-277 (NKKD) and Ala-331 contribute to the GTP site. The G5 motif stretch occupies residues 329 to 334 (TCATDT).

This sequence belongs to the G-alpha family. G(q) subfamily. In terms of assembly, g proteins are composed of 3 units; alpha, beta and gamma. The alpha chain contains the guanine nucleotide binding site. Interacts with RGS22. Interacts with NTSR1.

The protein resides in the cell membrane. It is found in the cytoplasm. The enzyme catalyses GTP + H2O = GDP + phosphate + H(+). Functionally, guanine nucleotide-binding proteins (G proteins) function as transducers downstream of G protein-coupled receptors (GPCRs) in numerous signaling cascades. The alpha chain contains the guanine nucleotide binding site and alternates between an active, GTP-bound state and an inactive, GDP-bound state. Signaling by an activated GPCR promotes GDP release and GTP binding. The alpha subunit has a low GTPase activity that converts bound GTP to GDP, thereby terminating the signal. Both GDP release and GTP hydrolysis are modulated by numerous regulatory proteins. Signaling is mediated via phospholipase C-beta-dependent inositol lipid hydrolysis for signal propagation: activates phospholipase C-beta: following GPCR activation, GNA11 activates PLC-beta (PLCB1, PLCB2, PLCB3 or PLCB4), leading to production of diacylglycerol (DAG) and inositol 1,4,5-trisphosphate (IP3). Transduces FFAR4 signaling in response to long-chain fatty acids (LCFAs). Together with GNAQ, required for heart development. In the respiratory epithelium, transmits OXGR1-dependent signals that lead to downstream intracellular Ca(2+) release and mucocilliary clearance of airborne pathogens. The protein is Guanine nucleotide-binding protein subunit alpha-11 (Gna11) of Mus musculus (Mouse).